A 338-amino-acid chain; its full sequence is Anthranilate phosphoribosyltransferase (338 aa).

Residues glycine 81, 84–85, threonine 89, 91–94, 109–117, and alanine 121 contribute to the 5-phospho-alpha-D-ribose 1-diphosphate site; these read GD, NIST, and KHGNRALSS. Glycine 81 is an anthranilate binding site. Position 93 (serine 93) interacts with Mg(2+). An anthranilate-binding site is contributed by asparagine 112. Arginine 167 is an anthranilate binding site. The Mg(2+) site is built by aspartate 225 and glutamate 226.

It belongs to the anthranilate phosphoribosyltransferase family. Homodimer. It depends on Mg(2+) as a cofactor.

The enzyme catalyses N-(5-phospho-beta-D-ribosyl)anthranilate + diphosphate = 5-phospho-alpha-D-ribose 1-diphosphate + anthranilate. The protein operates within amino-acid biosynthesis; L-tryptophan biosynthesis; L-tryptophan from chorismate: step 2/5. Its function is as follows. Catalyzes the transfer of the phosphoribosyl group of 5-phosphorylribose-1-pyrophosphate (PRPP) to anthranilate to yield N-(5'-phosphoribosyl)-anthranilate (PRA). This chain is Anthranilate phosphoribosyltransferase, found in Rhizobium etli (strain CIAT 652).